The chain runs to 192 residues: Anthrone oxygenase (192 aa).

3 helical membrane-spanning segments follow: residues 12 to 32 (IVTGSFLSGAMITLSTITVPV), 54 to 74 (GHISLPTISIATAILYFYIAA), and 86 to 106 (AALVGFLTIVMVPFTWIVMSS). 3 N-linked (GlcNAc...) asparagine glycosylation sites follow: Asn-130, Asn-138, and Asn-147. The helical transmembrane segment at 172–192 (MHLVRSLFPLMAAVLGVGICV) threads the bilayer.

This sequence belongs to the anthrone oxygenase family.

It localises to the membrane. The catalysed reaction is emodin anthrone + O2 = emodin + H2O + H(+). It functions in the pathway secondary metabolite biosynthesis. Anthrone oxygenase; part of the gene cluster that mediates the biosynthesis of monodictyphenone, a prenyl xanthone derivative. The pathway begins with the synthesis of atrochrysone thioester by the polyketide synthase (PKS) mdpG. The atrochrysone carboxyl ACP thioesterase mdpF then breaks the thioester bond and releases the atrochrysone carboxylic acid from mdpG. The atrochrysone carboxylic acid is then converted to atrochrysone which is further transformed into emodin anthrone by mdpH-1 and mdpH-2. Emodin is further modified to yield monodictyphenone via several steps involving mdpB, mdpC mdpJ, mdpK and mdpL. These enzymes with xptA, xptB and xptC are also proposed to be involved in the synthesis of shamixanthone from emodin. Especially, direct reduction of emodin by the short chain dehydrogenase mdpC followed by dehydration catalyzed by the scytalone dehydratase-like protein mdpB gives loss of oxygen and formation of chrysophanol intermediate in two simple steps. This is Anthrone oxygenase from Emericella nidulans (strain FGSC A4 / ATCC 38163 / CBS 112.46 / NRRL 194 / M139) (Aspergillus nidulans).